We begin with the raw amino-acid sequence, 102 residues long: Cytochrome c (102 aa).

Gly-1 is modified (N-acetylglycine). The segment covering 1 to 11 (GDAERGKKLFE) has biased composition (basic and acidic residues). A disordered region spans residues 1 to 26 (GDAERGKKLFESRAGQCHSSQKGVNS). Heme c is bound by residues Cys-17, His-18, and Met-79. Over residues 17-26 (CHSSQKGVNS) the composition is skewed to polar residues. Residue Lys-85 is modified to N6,N6,N6-trimethyllysine.

Belongs to the cytochrome c family. Post-translationally, binds 1 heme c group covalently per subunit.

It localises to the mitochondrion intermembrane space. Its function is as follows. Electron carrier protein. The oxidized form of the cytochrome c heme group can accept an electron from the heme group of the cytochrome c1 subunit of cytochrome reductase. Cytochrome c then transfers this electron to the cytochrome oxidase complex, the final protein carrier in the mitochondrial electron-transport chain. The polypeptide is Cytochrome c (Euglena viridis (Cercaria viridis)).